The following is a 275-amino-acid chain: MQLFDDFCKSFNKELQRANFGFAYNRVHLFYRSQWQKDEINTIYLLYRWIWALFFLGVYIMCVIVQFCDGKFFIYMTNWGFGLCTITMLISAVQVTCWHFDVRSTRSLVQESGHKAETSRGLKIYWWLYNMTLSLALIISTVYWVFLHGKMNKPMRFPAISIITHGMNSVMMLIDFLVIAFPLRILHMVYGMSLAIFFFLFTLIYHLCGGTDEFGNHYVYPILDWNNPNRCMVTFVGIFLLIMCYWVLLFGLYKLKRMFNRAFSVVWSPHAVGLI.

6 helical membrane-spanning segments follow: residues 45 to 65 (LLYR…CVIV), 72 to 92 (FFIY…LISA), 127 to 147 (WLYN…WVFL), 162 to 182 (IITH…IAFP), 185 to 205 (ILHM…TLIY), and 232 to 252 (MVTF…LFGL).

Expressed in cells of the somatic mesoderm, most notably the muscle founder cells, between embryonic stages 12 and 14, in growing muscle fibers in dorsal, lateral and ventral positions. At stage 16 strongest expression is in some ventral muscles and muscle 8. At stages 16/17 expression is restricted to some cells of the CNS, the brain and the gonads.

It is found in the membrane. Functionally, may have a central role in the fusion process during myogenesis, within the somatic mesoderm. In Drosophila melanogaster (Fruit fly), this protein is Protein rolling stone (rost).